Consider the following 280-residue polypeptide: MNILIKSAVKNFIVFSTALYTSFSFAQSKLAIVIDDVGYHLKEDAAIFAMPREISVAIIPAAPYARARNQEAKSQGRDILIHMPMQPVSAVKIEDGGLHLGMSAAQVNDRVNTAKNIVRDAIGMNNHMGSAATADPQLMTYLMTALQEKHLFFLDSRTIGKSVAGKIAKEQGVRSLDRHIFLDDSNEFADVQRQFKAAIHYARKHGSAIAIGHPRPNTIAVLQAGLRNLPEDIQLVGMGNLWRNEKVIPPKPFILLFSEVPAPTSIEPFEPVGLLRGIPK.

The signal sequence occupies residues Met1–Ala26.

This sequence to E.coli YibQ.

This is an uncharacterized protein from Haemophilus influenzae (strain ATCC 51907 / DSM 11121 / KW20 / Rd).